A 178-amino-acid chain; its full sequence is Relaxin-like protein SQ10 (178 aa).

The first 20 residues, 1 to 20 (MPALLFYLLGFCLLQGQVTG), serve as a signal peptide directing secretion. Disulfide bonds link Cys34–Cys165, Cys46–Cys178, and Cys164–Cys169. A propeptide spans 54–150 (ESPSPENPFL…SSASESNTFS (97 aa)) (connecting peptide).

Belongs to the insulin family. As to quaternary structure, heterodimer of a B chain and an A chain linked by two disulfide bonds.

It localises to the secreted. In Oryctolagus cuniculus (Rabbit), this protein is Relaxin-like protein SQ10.